The chain runs to 966 residues: Mitogen-activated protein kinase kinase kinase 13 (966 aa).

The interval 1-59 is disordered; that stretch reads MANPQEHLSCSSSPRLPLSENKTFNGLQDDLAPMGSHASPKLLKDQQEKGMVQTELAEG. The span at 8-19 shows a compositional bias: low complexity; the sequence is LSCSSSPRLPLS. A Protein kinase domain is found at 168-409; sequence ISELQWLGSG…FRQTLMHLDI (242 aa). ATP is bound by residues 174 to 182 and Lys-195; that span reads LGSGAQGAV. Catalysis depends on Asp-279, which acts as the Proton acceptor. Leucine-zipper regions lie at residues 433-454 and 486-507; these read VKKH…DEEL and LSAI…EQAV. A coiled-coil region spans residues 457-496; it reads RRREELRHALDIREHYERKLERANNLYMELSAIMLQLEMR. Disordered stretches follow at residues 561-663, 743-874, and 937-966; these read EVAP…GQDI, LDVP…DELA, and QFEE…SATW. Positions 567 to 581 are enriched in low complexity; the sequence is SPLSGSPKLSSSSSK. The segment covering 582 to 594 has biased composition (basic residues); it reads SRYRSKPRHRRGN. The span at 609–622 shows a compositional bias: polar residues; it reads QPAQEDSPHPTSLH. Residues 629-642 show a composition bias toward low complexity; the sequence is PSSQHHNLLQQQYQ. Over residues 814–827 the composition is skewed to acidic residues; it reads DSSEEEEGEVDSEV. Positions 815-828 are acidic; the sequence is SSEEEEGEVDSEVE. Residues 840–855 are compositionally biased toward polar residues; it reads SSCQSYSTFSSENFSV. The span at 939–950 shows a compositional bias: acidic residues; it reads EESDCDSSDGEC. Positions 954–966 are enriched in polar residues; the sequence is TVRTNKHYSSATW.

This sequence belongs to the protein kinase superfamily. Ser/Thr protein kinase family. Homodimer; forms dimers through the leucine-zipper motif. Interacts with the C-terminus of MAPK8IP1 through the kinase catalytic domain. Binds PRDX3. Associates with the IKK complex through the kinase domain. Mg(2+) is required as a cofactor. In terms of processing, autophosphorylated on serine and threonine residues.

Its subcellular location is the cytoplasm. The protein resides in the membrane. The enzyme catalyses L-seryl-[protein] + ATP = O-phospho-L-seryl-[protein] + ADP + H(+). It carries out the reaction L-threonyl-[protein] + ATP = O-phospho-L-threonyl-[protein] + ADP + H(+). With respect to regulation, activated by autophosphorylation and homodimerization. Its function is as follows. Activates the JUN N-terminal pathway through activation of the MAP kinase kinase MAP2K7. Acts synergistically with PRDX3 to regulate the activation of NF-kappa-B in the cytosol. This activation is kinase-dependent and involves activating the IKK complex, the IKBKB-containing complex that phosphorylates inhibitors of NF-kappa-B. This chain is Mitogen-activated protein kinase kinase kinase 13 (MAP3K13), found in Bos taurus (Bovine).